The following is a 252-amino-acid chain: 5'-nucleotidase SurE (252 aa).

Residues Asp-8, Asp-9, Ser-39, and Asn-91 each contribute to the a divalent metal cation site.

It belongs to the SurE nucleotidase family. It depends on a divalent metal cation as a cofactor.

It is found in the cytoplasm. The catalysed reaction is a ribonucleoside 5'-phosphate + H2O = a ribonucleoside + phosphate. In terms of biological role, nucleotidase that shows phosphatase activity on nucleoside 5'-monophosphates. In Geobacter metallireducens (strain ATCC 53774 / DSM 7210 / GS-15), this protein is 5'-nucleotidase SurE.